The sequence spans 51 residues: Ovomucoid (51 aa).

Residues 1 to 49 (VDCSEYPQPACTTERRPVCGSNNKTYSNKCNFCNAVVKSNGTLTVSHFG) enclose the Kazal-like domain. Intrachain disulfides connect Cys3-Cys33, Cys11-Cys30, and Cys19-Cys51. N-linked (GlcNAc...) asparagine glycosylation occurs at Asn40.

It localises to the secreted. The sequence is that of Ovomucoid from Polyplectron napoleonis (Palawan peacock-pheasant).